Reading from the N-terminus, the 151-residue chain is S-protein homolog 74 (151 aa).

An N-terminal signal peptide occupies residues 1–25 (MNYIKQFILAICFYLVLTCQDHVLA).

It belongs to the plant self-incompatibility (S1) protein family.

It is found in the secreted. The sequence is that of S-protein homolog 74 from Arabidopsis thaliana (Mouse-ear cress).